Reading from the N-terminus, the 243-residue chain is Small ribosomal subunit protein eS4 (243 aa).

Residues 37–99 (IPLALLLKHY…SDLYFRIVPD (63 aa)) form the S4 RNA-binding domain.

This sequence belongs to the eukaryotic ribosomal protein eS4 family.

The polypeptide is Small ribosomal subunit protein eS4 (rps4e) (Sulfurisphaera tokodaii (strain DSM 16993 / JCM 10545 / NBRC 100140 / 7) (Sulfolobus tokodaii)).